We begin with the raw amino-acid sequence, 351 residues long: Putative F-box protein At4g09790 (351 aa).

The F-box domain occupies 1-51; that stretch reads MTTICDLPRDLVARILSRVPLTSMRRVRFTCKRWNTISKDPSFAKTHFGKA.

This is Putative F-box protein At4g09790 from Arabidopsis thaliana (Mouse-ear cress).